Reading from the N-terminus, the 783-residue chain is Polyribonucleotide nucleotidyltransferase 1, mitochondrial (783 aa).

A mitochondrion-targeting transit peptide spans 1–45; it reads MAACRYCCSCLRLRPLSDGPFLLPRRDRALTQLQVRALWSSAGSR. N6-acetyllysine is present on residues lysine 250, lysine 264, lysine 285, and lysine 289. The residue at position 552 (lysine 552) is an N6-succinyllysine. The 60-residue stretch at 605 to 664 folds into the KH domain; it reads PVVETVQVPLSKRAKFVGPGGYNLKKLQAETGVTISQVDEETFSVFAPTPSAMHEARDFI. Residues 679–750 enclose the S1 motif domain; sequence GAVYTATITE…ADGRMRLSRK (72 aa). Serine 754 and serine 782 each carry phosphoserine.

Belongs to the polyribonucleotide nucleotidyltransferase family. As to quaternary structure, homotrimer; in free form. Homooligomer. Component of the mitochondrial degradosome (mtEXO) complex which is a heteropentamer containing 2 copies of SUPV3L1 and 3 copies of PNPT1. As part of the mitochondrial degradosome complex, interacts with GRSF1 in an RNA-dependent manner; the interaction enhances the activity of the complex. Interacts with TCL1A; the interaction has no effect on PNPT1 exonuclease activity.

Its subcellular location is the cytoplasm. The protein localises to the mitochondrion matrix. It localises to the mitochondrion intermembrane space. It carries out the reaction RNA(n+1) + phosphate = RNA(n) + a ribonucleoside 5'-diphosphate. Its function is as follows. RNA-binding protein implicated in numerous RNA metabolic processes. Catalyzes the phosphorolysis of single-stranded polyribonucleotides processively in the 3'-to-5' direction. Mitochondrial intermembrane factor with RNA-processing exoribonulease activity. Component of the mitochondrial degradosome (mtEXO) complex, that degrades 3' overhang double-stranded RNA with a 3'-to-5' directionality in an ATP-dependent manner. Involved in the degradation of non-coding mitochondrial transcripts (MT-ncRNA) and tRNA-like molecules. Required for correct processing and polyadenylation of mitochondrial mRNAs. Plays a role as a cytoplasmic RNA import factor that mediates the translocation of small RNA components, like the 5S RNA, the RNA subunit of ribonuclease P and the mitochondrial RNA-processing (MRP) RNA, into the mitochondrial matrix. Plays a role in mitochondrial morphogenesis and respiration; regulates the expression of the electron transport chain (ETC) components at the mRNA and protein levels. In the cytoplasm, shows a 3'-to-5' exoribonuclease mediating mRNA degradation activity; degrades c-myc mRNA upon treatment with IFNB1/IFN-beta, resulting in a growth arrest in melanoma cells. Regulates the stability of specific mature miRNAs in melanoma cells; specifically and selectively degrades miR-221, preferentially. Also plays a role in RNA cell surveillance by cleaning up oxidized RNAs. Binds to the RNA subunit of ribonuclease P, MRP RNA and miR-221 microRNA. The polypeptide is Polyribonucleotide nucleotidyltransferase 1, mitochondrial (Homo sapiens (Human)).